Consider the following 116-residue polypeptide: UPF0654 protein C869.09 (116 aa).

The tract at residues 32–116 (LKEHGSESHY…LLEEVDDESK (85 aa)) is disordered. Residues 39–48 (SHYTTGTTRG) show a composition bias toward polar residues. Basic and acidic residues predominate over residues 49 to 64 (QKADADDAGELREEGF).

This sequence belongs to the UPF0654 (con-6) family.

It is found in the cytoplasm. It localises to the nucleus. This Schizosaccharomyces pombe (strain 972 / ATCC 24843) (Fission yeast) protein is UPF0654 protein C869.09.